The following is a 207-amino-acid chain: Large ribosomal subunit protein uL4 (207 aa).

Positions 48–70 (KAQKTRSEVSGGGAKPWRQKGTG) are disordered.

The protein belongs to the universal ribosomal protein uL4 family. Part of the 50S ribosomal subunit.

Functionally, one of the primary rRNA binding proteins, this protein initially binds near the 5'-end of the 23S rRNA. It is important during the early stages of 50S assembly. It makes multiple contacts with different domains of the 23S rRNA in the assembled 50S subunit and ribosome. In terms of biological role, forms part of the polypeptide exit tunnel. The sequence is that of Large ribosomal subunit protein uL4 from Francisella philomiragia subsp. philomiragia (strain ATCC 25017 / CCUG 19701 / FSC 153 / O#319-036).